Reading from the N-terminus, the 65-residue chain is Photosystem II reaction center protein H (65 aa).

Residues G27–L47 traverse the membrane as a helical segment.

This sequence belongs to the PsbH family. PSII is composed of 1 copy each of membrane proteins PsbA, PsbB, PsbC, PsbD, PsbE, PsbF, PsbH, PsbI, PsbJ, PsbK, PsbL, PsbM, PsbT, PsbX, PsbY, Psb30/Ycf12, peripheral proteins PsbO, CyanoQ (PsbQ), PsbU, PsbV and a large number of cofactors. It forms dimeric complexes.

The protein localises to the cellular thylakoid membrane. Functionally, one of the components of the core complex of photosystem II (PSII), required for its stability and/or assembly. PSII is a light-driven water:plastoquinone oxidoreductase that uses light energy to abstract electrons from H(2)O, generating O(2) and a proton gradient subsequently used for ATP formation. It consists of a core antenna complex that captures photons, and an electron transfer chain that converts photonic excitation into a charge separation. In Prochlorococcus marinus (strain NATL1A), this protein is Photosystem II reaction center protein H.